The sequence spans 398 residues: Succinate--CoA ligase [ADP-forming] subunit beta (398 aa).

Positions 9–254 (KRLLHEYGAP…LSEEDPKEIE (246 aa)) constitute an ATP-grasp domain. Residues Lys46, 53-55 (GRG), Glu109, Ala112, and Glu117 contribute to the ATP site. Mg(2+) is bound by residues Asn209 and Asp223. Residues Asn274 and 331 to 333 (GIM) contribute to the substrate site.

Belongs to the succinate/malate CoA ligase beta subunit family. In terms of assembly, heterotetramer of two alpha and two beta subunits. The cofactor is Mg(2+).

The enzyme catalyses succinate + ATP + CoA = succinyl-CoA + ADP + phosphate. It catalyses the reaction GTP + succinate + CoA = succinyl-CoA + GDP + phosphate. Its pathway is carbohydrate metabolism; tricarboxylic acid cycle; succinate from succinyl-CoA (ligase route): step 1/1. In terms of biological role, succinyl-CoA synthetase functions in the citric acid cycle (TCA), coupling the hydrolysis of succinyl-CoA to the synthesis of either ATP or GTP and thus represents the only step of substrate-level phosphorylation in the TCA. The beta subunit provides nucleotide specificity of the enzyme and binds the substrate succinate, while the binding sites for coenzyme A and phosphate are found in the alpha subunit. This Bartonella tribocorum (strain CIP 105476 / IBS 506) protein is Succinate--CoA ligase [ADP-forming] subunit beta.